A 286-amino-acid polypeptide reads, in one-letter code: MWQAISNLLSEQHTDGAEIELRNELPGGEIHAAWHLRFGGKDYFVKCDERELLPIFTAEADQLELLSRCKTVSVPQVFAVGSDRDYSFLVMEYLPPRPLDAHNAFLLGQQIAHLHQWSDQPQFGLDFDNDLSTTPQPNAWQRRWSTFFAEQRIGWQLELAAEKGLHFGDIDNIVESVQQRLSSHQPQPSLLHGDLWSGNCALGPNGPYIFDPACYWGDRECDLAMLPLHPEQPPQIYDGYQSVSPLPAGFLERQPIYQLYTLLNRAILFGGQHLVTAQKALDEALQ.

92–94 (EYL) contributes to the ATP binding site. The Proton acceptor role is filled by Asp-194.

This sequence belongs to the fructosamine kinase family.

Ketoamine kinase that phosphorylates ketoamines on the third carbon of the sugar moiety to generate ketoamine 3-phosphate. The chain is Probable ketoamine kinase EAE_16955 from Klebsiella aerogenes (strain ATCC 13048 / DSM 30053 / CCUG 1429 / JCM 1235 / KCTC 2190 / NBRC 13534 / NCIMB 10102 / NCTC 10006 / CDC 819-56) (Enterobacter aerogenes).